Reading from the N-terminus, the 294-residue chain is Nucleophosmin (294 aa).

The span at 121–133 (LEEEPESEDEEED) shows a compositional bias: acidic residues. The tract at residues 121–244 (LEEEPESEDE…PKTPKVPLSL (124 aa)) is disordered. The short motif at 153–158 (PQKKPK) is the Nuclear localization signal element. Residues 161–186 (EDDEDDDEDEDDDEDDEDDLDDDEEE) are compositionally biased toward acidic residues. The short motif at 190-196 (PMKKPAR) is the Nuclear localization signal element. The span at 223-233 (KTPDSKKDKSL) shows a compositional bias: basic and acidic residues.

It belongs to the nucleoplasmin family. In terms of assembly, decamer formed by two pentameric rings associated in a head-to-head fashion. Post-translationally, phosphorylated.

Its subcellular location is the cytoplasm. The protein resides in the nucleus. The protein localises to the nucleoplasm. It is found in the nucleolus. Its function is as follows. Acts as a chaperonin for the core histones H3, H2B and H4. Associated with nucleolar ribonucleoprotein structures and bind single-stranded nucleic acids. It may function in the assembly and/or transport of ribosome. May stimulate endonuclease activity on apurinic/apyrimidinic (AP) double-stranded DNA. May inhibit endonuclease activity on AP single-stranded RNA. This chain is Nucleophosmin (NPM1), found in Gallus gallus (Chicken).